Here is a 75-residue protein sequence, read N- to C-terminus: Peptide Ctri10033 (75 aa).

An N-terminal signal peptide occupies residues 1–22; sequence MNSKYLFVFLILIVTFTDLCQG. Arg-43 carries the arginine amide modification. Positions 47 to 75 are excised as a propeptide; the sequence is ELGSQYDYLQDFRKRELDLDDLLSKFPDY.

It belongs to the non-disulfide-bridged peptide (NDBP) superfamily. Short antimicrobial peptide (group 4) family. As to expression, expressed by the venom gland.

Its subcellular location is the secreted. The sequence is that of Peptide Ctri10033 from Chaerilus tricostatus (Scorpion).